The primary structure comprises 139 residues: Protein archease (139 aa).

Residues Asp12, Asp138, and Ile139 each contribute to the Ca(2+) site.

The protein belongs to the archease family.

Its function is as follows. Activates the tRNA-splicing ligase complex by facilitating the enzymatic turnover of catalytic subunit RtcB. Acts by promoting the guanylylation of RtcB, a key intermediate step in tRNA ligation. Can also alter the NTP specificity of RtcB such that ATP, dGTP or ITP is used efficiently. In Saccharolobus islandicus (strain L.S.2.15 / Lassen #1) (Sulfolobus islandicus), this protein is Protein archease.